Consider the following 303-residue polypeptide: Archaeosortase A (303 aa).

Transmembrane regions (helical) follow at residues 3 to 23 (GLLS…GAVA), 36 to 56 (TAAW…FTLV), 60 to 80 (YIEG…GWLL), 93 to 113 (AVAA…FTLL), 169 to 189 (VVLA…IAAV), 200 to 220 (LAIA…FIAI), and 259 to 279 (LAVV…PELL). The active-site Acyl-thioester intermediate is cysteine 173. Catalysis depends on arginine 214, which acts as the Proton donor.

It belongs to the exosortase/archaeosortase family. Archaeosortase A subfamily.

The protein localises to the cell membrane. Its function is as follows. Transpeptidase that recognizes and modifies its substrate by proteolytic cleavage of a sorting signal. Following cleavage, a covalent intermediate is formed via a thioester bond between the archaeosortase and its substrate, which is then transferred and covalently attached to the cell membrane. This sortase recognizes a tripartite structure consisting of a conserved Pro-Gly-Phe (PGF) motif, followed by a transmembrane alpha helix domain and a cluster of basic residues, usually at the C-terminus of target proteins. Confirmed substrates include the cell surface S-layer glycoprotein Csg and HVO_0405. ArtA is required for the C-terminal processing of Csg and for its lipidation and attachment to the archaeal plasma membrane. It is also required for the processing of HVO_0405, which contains an atypical central tripartite structure. This is Archaeosortase A from Haloferax volcanii (strain ATCC 29605 / DSM 3757 / JCM 8879 / NBRC 14742 / NCIMB 2012 / VKM B-1768 / DS2) (Halobacterium volcanii).